We begin with the raw amino-acid sequence, 224 residues long: uncharacterized protein (224 aa).

Pro residues predominate over residues 44–139; it reads TSPPIVPLPT…PSPPPSPSPL (96 aa). Positions 44-145 are disordered; it reads TSPPIVPLPT…PSPLGEPMYY (102 aa).

This is an uncharacterized protein from Lepidoptera (butterflies and moths).